The primary structure comprises 1034 residues: Isoleucine--tRNA ligase (1034 aa).

The 'HIGH' region motif lies at 46 to 56 (PYCSGAIHLGT). Residues 598–602 (KMSKS) carry the 'KMSKS' region motif. Lysine 601 is an ATP binding site.

Belongs to the class-I aminoacyl-tRNA synthetase family. IleS type 2 subfamily. As to quaternary structure, monomer. Zn(2+) is required as a cofactor.

It is found in the cytoplasm. The catalysed reaction is tRNA(Ile) + L-isoleucine + ATP = L-isoleucyl-tRNA(Ile) + AMP + diphosphate. In terms of biological role, catalyzes the attachment of isoleucine to tRNA(Ile). As IleRS can inadvertently accommodate and process structurally similar amino acids such as valine, to avoid such errors it has two additional distinct tRNA(Ile)-dependent editing activities. One activity is designated as 'pretransfer' editing and involves the hydrolysis of activated Val-AMP. The other activity is designated 'posttransfer' editing and involves deacylation of mischarged Val-tRNA(Ile). This chain is Isoleucine--tRNA ligase, found in Methanococcus maripaludis (strain DSM 14266 / JCM 13030 / NBRC 101832 / S2 / LL).